A 344-amino-acid chain; its full sequence is Acireductone dioxygenase (344 aa).

Fe(2+) contacts are provided by H92, H94, E98, and H137. Ni(2+)-binding residues include H92, H94, E98, and H137.

It belongs to the acireductone dioxygenase (ARD) family. It depends on Fe(2+) as a cofactor. Requires Ni(2+) as cofactor.

Its subcellular location is the cytoplasm. It is found in the nucleus. The catalysed reaction is 1,2-dihydroxy-5-(methylsulfanyl)pent-1-en-3-one + O2 = 4-methylsulfanyl-2-oxobutanoate + formate + 2 H(+). The enzyme catalyses 1,2-dihydroxy-5-(methylsulfanyl)pent-1-en-3-one + O2 = 3-(methylsulfanyl)propanoate + CO + formate + 2 H(+). It functions in the pathway amino-acid biosynthesis; L-methionine biosynthesis via salvage pathway; L-methionine from S-methyl-5-thio-alpha-D-ribose 1-phosphate: step 5/6. Functionally, catalyzes 2 different reactions between oxygen and the acireductone 1,2-dihydroxy-3-keto-5-methylthiopentene (DHK-MTPene) depending upon the metal bound in the active site. Fe-containing acireductone dioxygenase (Fe-ARD) produces formate and 2-keto-4-methylthiobutyrate (KMTB), the alpha-ketoacid precursor of methionine in the methionine recycle pathway. Ni-containing acireductone dioxygenase (Ni-ARD) produces methylthiopropionate, carbon monoxide and formate, and does not lie on the methionine recycle pathway. In Leishmania major, this protein is Acireductone dioxygenase.